Here is a 109-residue protein sequence, read N- to C-terminus: Parvalbumin alpha (109 aa).

EF-hand domains are found at residues 38–73 and 77–109; these read KTDA…FSAH and LNDT…VAQA. Ca(2+)-binding residues include aspartate 51, aspartate 53, serine 55, glutamate 62, aspartate 90, aspartate 92, aspartate 94, lysine 96, and glutamate 101.

It belongs to the parvalbumin family.

In terms of biological role, in muscle, parvalbumin is thought to be involved in relaxation after contraction. It binds two calcium ions. This Triakis semifasciata (Leopard shark) protein is Parvalbumin alpha.